We begin with the raw amino-acid sequence, 136 residues long: Protein NrdI (136 aa).

It belongs to the NrdI family.

Probably involved in ribonucleotide reductase function. This Shigella dysenteriae serotype 1 (strain Sd197) protein is Protein NrdI.